The chain runs to 1371 residues: MSRKLGSNAPTPMHLRLGNRYETIEQLFNKTRDINRPNKQQDVEIANTQETQWMHACKLALDLATEEQFERAVSIVKEWSIEDRKHDNPTESSYFPVIIRSSKEAEFPFKERSAVLTQYGMDALLEARLNDPSGKRGVDAEESKLGFINIETMNVKINGDYVTVNGVDLPKWSADNDASAKVGVTCSEAWFGARDARWTEACRHLPFSLASTYVTWLMLLTEQAAGNDKFNIDGHGFTNLLTGLIYLASEWATRTSKSRLKKNVDIKGRVLLESWIKGNPPAIPSWMDDWGKPMKYKYVTESDVGIKPHNDKGLAEWSKEAQLRNTPEGADTESLLRSRIPFTEADSGPPYITDSALTTSGPLRAFLCYSTAVECCGSIHLRGFTEYYKCVLHYLGTQPGKIGKQISKVSSPVARALGATSKEVMVPRRVQPSEHVWCDETDCVTVKFEDNYVLQLMCASYDIPTNWESLENKMFENELMGHCLRHIYDEYKHEHVNIHNSDLFDVITHLTNAGSAEGYVRSCLATLPVDGYMSHMKRIALEGIDSSEDKEVSQYERVHWDAIMRTILPPTPEGAVQELKALSNSRSGGADRIRFKSDRNTALANSDRETDAPFVMSSNRKNSTIAMAAHLILNPVTLKHRSSYEVPLPTGIRSVPARILRLIYNMPLPMQSLLQPLYKAMKAYMKRPTHNERYQLALNKGVVVHDSRTLINNSINCVHNPRLVSIADDASKLDQHEGPRARNVLIDALEAIPIDNGFADEFGDSYTDLMRNMLAGWNTNYFAFNVDAEQKQVMSVDTDPSGALITAEKNTVTSAGIQDMIIARTNIPQRDYLWGDDAYAMLTIPDDRNIVELIREREVIATDAGQVMDTLNGSWSGRGVHFLQVYTLWGQRMKRRTAIDHENPARYSMGDSGSLLTKYVMMGTRGGGIQMTNMLILSTIIQASRFKVFGRQFFLPFPTIAAPGGHVNMILTGFPAPNSKLWLSTNYHHIMPQHVKDRGVIKRPAVDQPEHIGARLLSEKDTLEVKVTIGGAVAQDAEGNLPTAGDLMKRAHRKLREQTRHDLYKKNKHKFLNWALTADVDLGDYSKLAYSRSTQGAAEKAIGTQTAEKHLKKWFDEKAMVRAGLISVARGAADAPIPEETESLLLNDTMHVGKVRIAWRFDNDIYLKFKHDEKHNILLFNKAMNPVKEYKYRWHPFWSQPKCMKMLLAYTGVHARPNVLTIKDLTAKFSPHRFRADLHAEDIMGLLKKVPTHMQAQALSFVGFDSHEIEEMQKHIPKIHLYEDLSELDDYSGMDDSVKCAELDRITEFLQMVMSDATYGILDDPESPELRSAVHVQFVSLLADEFNVSYACACSNEIRIRLPIPELSYDV.

It belongs to the reoviridae RNA-directed RNA polymerase family.

Its subcellular location is the virion. It carries out the reaction RNA(n) + a ribonucleoside 5'-triphosphate = RNA(n+1) + diphosphate. Functionally, RNA-directed RNA polymerase that is involved in transcription and genome replication. Following infection, it catalyzes the synthesis of fully conservative plus strands. After core assembly, which consists in recruitment of one capped plus-strand for each genomic segments and polymerase complexes, the polymerase switches mode and catalyzes the synthesis of complementary minus-strands. This Micromonas pusilla (Picoplanktonic green alga) protein is RNA-directed RNA polymerase VP2 (S2).